Reading from the N-terminus, the 460-residue chain is Lipase member H (460 aa).

An N-terminal signal peptide occupies residues M1 to T24. 2 N-linked (GlcNAc...) asparagine glycosylation sites follow: N67 and N75. Residue S163 is the Nucleophile of the active site. N-linked (GlcNAc...) asparagine glycosylation occurs at N177. The Charge relay system role is filled by D187. A disulfide bridge links C242 with C255. The active-site Charge relay system is the H257. 2 disulfide bridges follow: C279–C290 and C293–C301. A glycan (N-linked (GlcNAc...) asparagine) is linked at N289. Residue N366 is glycosylated (N-linked (GlcNAc...) asparagine). A disulfide bridge connects residues C436 and C455.

The protein belongs to the AB hydrolase superfamily. Lipase family.

It is found in the secreted. Its subcellular location is the cell membrane. It catalyses the reaction 1-hexadecanoyl-2-(9Z-octadecenoyl)-sn-glycero-3-phosphate + H2O = 2-(9Z-octadecenoyl)-sn-glycero-3-phosphate + hexadecanoate + H(+). Hydrolyzes specifically phosphatidic acid (PA) to produce 2-acyl lysophosphatidic acid (LPA; a potent bioactive lipid mediator) and fatty acid. Does not hydrolyze other phospholipids, like phosphatidylserine (PS), phosphatidylcholine (PC) and phosphatidylethanolamine (PE) or triacylglycerol (TG). This chain is Lipase member H (liph), found in Xenopus tropicalis (Western clawed frog).